The following is a 246-amino-acid chain: NAD(P)H-hydrate epimerase (246 aa).

One can recognise a YjeF N-terminal domain in the interval 12–234 (AAEIDKELMG…DFANKFGFEP (223 aa)). A (6S)-NADPHX-binding site is contributed by 69–73 (NNGGD). Residues Asn70 and Asp138 each coordinate K(+). Residues 142 to 148 (GFSFKPP) and Asp173 each bind (6S)-NADPHX. Thr176 contributes to the K(+) binding site.

The protein belongs to the NnrE/AIBP family. It depends on K(+) as a cofactor.

Its subcellular location is the cytoplasm. The protein resides in the mitochondrion. The catalysed reaction is (6R)-NADHX = (6S)-NADHX. It catalyses the reaction (6R)-NADPHX = (6S)-NADPHX. Catalyzes the epimerization of the S- and R-forms of NAD(P)HX, a damaged form of NAD(P)H that is a result of enzymatic or heat-dependent hydration. This is a prerequisite for the S-specific NAD(P)H-hydrate dehydratase to allow the repair of both epimers of NAD(P)HX. The protein is NAD(P)H-hydrate epimerase of Saccharomyces cerevisiae (strain ATCC 204508 / S288c) (Baker's yeast).